A 319-amino-acid chain; its full sequence is Putative peptide permease protein BRA0408/BS1330_II0405 (319 aa).

The next 6 helical transmembrane spans lie at 9-29 (LLIG…LLQL), 102-122 (LLLM…TGII), 138-158 (LALL…LYVF), 182-202 (LLRH…ALIM), 242-262 (LPVV…AIFI), and 284-304 (YPVI…VNIL). The region spanning 98-305 (IGPTLLLMAA…ACVIIVNILT (208 aa)) is the ABC transmembrane type-1 domain.

Belongs to the binding-protein-dependent transport system permease family. As to quaternary structure, the complex is composed of two ATP-binding proteins (BRA0404 and BRA0405), two transmembrane proteins (BRA0407 and BRA0408) and a solute-binding protein (BRA0409).

The protein localises to the cell inner membrane. In terms of biological role, probably part of an ABC transporter complex that could be involved in peptide import. Probably responsible for the translocation of the substrate across the membrane. The protein is Putative peptide permease protein BRA0408/BS1330_II0405 of Brucella suis biovar 1 (strain 1330).